The primary structure comprises 429 residues: Citrate synthase, chromosomal (429 aa).

Catalysis depends on residues His306 and Asp364.

The protein belongs to the citrate synthase family.

The catalysed reaction is oxaloacetate + acetyl-CoA + H2O = citrate + CoA + H(+). Its pathway is carbohydrate metabolism; tricarboxylic acid cycle; isocitrate from oxaloacetate: step 1/2. This chain is Citrate synthase, chromosomal (ccsA), found in Rhizobium tropici.